The chain runs to 146 residues: ATP synthase epsilon chain (146 aa).

A disordered region spans residues 102–122 (QSAKKRAEQHMQEAKEKHNER).

Belongs to the ATPase epsilon chain family. In terms of assembly, F-type ATPases have 2 components, CF(1) - the catalytic core - and CF(0) - the membrane proton channel. CF(1) has five subunits: alpha(3), beta(3), gamma(1), delta(1), epsilon(1). CF(0) has three main subunits: a, b and c.

It localises to the cell membrane. Produces ATP from ADP in the presence of a proton gradient across the membrane. The protein is ATP synthase epsilon chain of Lactobacillus gasseri (strain ATCC 33323 / DSM 20243 / BCRC 14619 / CIP 102991 / JCM 1131 / KCTC 3163 / NCIMB 11718 / NCTC 13722 / AM63).